We begin with the raw amino-acid sequence, 147 residues long: Peptide deformylase (147 aa).

Fe cation contacts are provided by C88 and H130. Residue E131 is part of the active site. H134 provides a ligand contact to Fe cation.

It belongs to the polypeptide deformylase family. The cofactor is Fe(2+).

The enzyme catalyses N-terminal N-formyl-L-methionyl-[peptide] + H2O = N-terminal L-methionyl-[peptide] + formate. Its function is as follows. Removes the formyl group from the N-terminal Met of newly synthesized proteins. Requires at least a dipeptide for an efficient rate of reaction. N-terminal L-methionine is a prerequisite for activity but the enzyme has broad specificity at other positions. This is Peptide deformylase from Clostridium botulinum (strain Alaska E43 / Type E3).